We begin with the raw amino-acid sequence, 358 residues long: MITGKTISLPLSVIACLGAGASQAAACANQTDCLKSASAKVSQTLTPKVVPVFGDYPKLYIHDSAANEDYTVPDTTKQEFDFYTNKTSFNLPRRSSIETREIASISPAMGFTVLLVEKTRDNTVSNGGSTLSLLSSNSNDAYLSFALGAKPSSSGQKWSFAKSLLQGNKAQTAYWQKPWDMNLLGPTGDFSGTEWIYYTFTPDGKVRIDRFAPYTYFLAFTAYQWDEAVLDGGFPHFPFDTGTPTNRPQSVTFGSVGPWLIGAAGAPGQTPPTSEPIEALPGFEGATIFSAPLSMKEVIAYQNSLRGSYFLDVDMLPCNSGQYLSGRISTPCGTGSPGNPPPNINSVAQHRISTNTNR.

The N-terminal stretch at 1–15 (MITGKTISLPLSVIA) is a signal peptide. A lipid anchor (N-palmitoyl cysteine) is attached at Cys-16. Cys-16 is lipidated: S-diacylglycerol cysteine. The segment at 331–358 (PCGTGSPGNPPPNINSVAQHRISTNTNR) is disordered. The segment covering 347–358 (VAQHRISTNTNR) has biased composition (polar residues).

The protein localises to the cell membrane. This is an uncharacterized protein from Sinorhizobium fredii (strain NBRC 101917 / NGR234).